A 428-amino-acid polypeptide reads, in one-letter code: Gamma-glutamyl phosphate reductase (428 aa).

The protein belongs to the gamma-glutamyl phosphate reductase family.

It localises to the cytoplasm. It catalyses the reaction L-glutamate 5-semialdehyde + phosphate + NADP(+) = L-glutamyl 5-phosphate + NADPH + H(+). It participates in amino-acid biosynthesis; L-proline biosynthesis; L-glutamate 5-semialdehyde from L-glutamate: step 2/2. Catalyzes the NADPH-dependent reduction of L-glutamate 5-phosphate into L-glutamate 5-semialdehyde and phosphate. The product spontaneously undergoes cyclization to form 1-pyrroline-5-carboxylate. This Picosynechococcus sp. (strain ATCC 27264 / PCC 7002 / PR-6) (Agmenellum quadruplicatum) protein is Gamma-glutamyl phosphate reductase.